The chain runs to 103 residues: Large ribosomal subunit protein bL21 (103 aa).

It belongs to the bacterial ribosomal protein bL21 family. Part of the 50S ribosomal subunit. Contacts protein L20.

Functionally, this protein binds to 23S rRNA in the presence of protein L20. The sequence is that of Large ribosomal subunit protein bL21 from Rhodococcus jostii (strain RHA1).